Consider the following 127-residue polypeptide: Large ribosomal subunit protein bL12 (127 aa).

The protein belongs to the bacterial ribosomal protein bL12 family. As to quaternary structure, homodimer. Part of the ribosomal stalk of the 50S ribosomal subunit. Forms a multimeric L10(L12)X complex, where L10 forms an elongated spine to which 2 to 4 L12 dimers bind in a sequential fashion. Binds GTP-bound translation factors.

In terms of biological role, forms part of the ribosomal stalk which helps the ribosome interact with GTP-bound translation factors. Is thus essential for accurate translation. The sequence is that of Large ribosomal subunit protein bL12 from Syntrophotalea carbinolica (strain DSM 2380 / NBRC 103641 / GraBd1) (Pelobacter carbinolicus).